A 61-amino-acid chain; its full sequence is Small ribosomal subunit protein uS14B (61 aa).

Residues cysteine 24, cysteine 27, cysteine 40, and cysteine 43 each contribute to the Zn(2+) site.

This sequence belongs to the universal ribosomal protein uS14 family. Zinc-binding uS14 subfamily. As to quaternary structure, part of the 30S ribosomal subunit. Contacts proteins S3 and S10. It depends on Zn(2+) as a cofactor.

Its function is as follows. Binds 16S rRNA, required for the assembly of 30S particles and may also be responsible for determining the conformation of the 16S rRNA at the A site. This Limosilactobacillus reuteri (strain DSM 20016) (Lactobacillus reuteri) protein is Small ribosomal subunit protein uS14B.